A 239-amino-acid polypeptide reads, in one-letter code: Pimeloyl-[acyl-carrier protein] methyl ester esterase (239 aa).

Substrate-binding positions include tryptophan 20, serine 77–methionine 78, and phenylalanine 138–glutamine 142. Serine 77 serves as the catalytic Nucleophile. Catalysis depends on residues aspartate 192 and histidine 220. Position 220 (histidine 220) interacts with substrate.

The protein belongs to the AB hydrolase superfamily. Carboxylesterase BioH family. As to quaternary structure, monomer.

Its subcellular location is the cytoplasm. The catalysed reaction is 6-carboxyhexanoyl-[ACP] methyl ester + H2O = 6-carboxyhexanoyl-[ACP] + methanol + H(+). It participates in cofactor biosynthesis; biotin biosynthesis. Functionally, the physiological role of BioH is to remove the methyl group introduced by BioC when the pimeloyl moiety is complete. It allows to synthesize pimeloyl-ACP via the fatty acid synthetic pathway through the hydrolysis of the ester bonds of pimeloyl-ACP esters. This Legionella pneumophila (strain Lens) protein is Pimeloyl-[acyl-carrier protein] methyl ester esterase.